A 354-amino-acid polypeptide reads, in one-letter code: Probable dual-specificity RNA methyltransferase RlmN (354 aa).

Residue glutamate 94 is the Proton acceptor of the active site. The Radical SAM core domain occupies 103 to 332; the sequence is GRRRNTACLS…QEAGLEAAIR (230 aa). A disulfide bridge connects residues cysteine 110 and cysteine 343. Residues cysteine 117, cysteine 121, and cysteine 124 each coordinate [4Fe-4S] cluster. Residues 169 to 170, serine 201, 224 to 226, and asparagine 300 each bind S-adenosyl-L-methionine; these read GE and SLH. Cysteine 343 (S-methylcysteine intermediate) is an active-site residue.

It belongs to the radical SAM superfamily. RlmN family. Requires [4Fe-4S] cluster as cofactor.

The protein localises to the cytoplasm. It carries out the reaction adenosine(2503) in 23S rRNA + 2 reduced [2Fe-2S]-[ferredoxin] + 2 S-adenosyl-L-methionine = 2-methyladenosine(2503) in 23S rRNA + 5'-deoxyadenosine + L-methionine + 2 oxidized [2Fe-2S]-[ferredoxin] + S-adenosyl-L-homocysteine. The catalysed reaction is adenosine(37) in tRNA + 2 reduced [2Fe-2S]-[ferredoxin] + 2 S-adenosyl-L-methionine = 2-methyladenosine(37) in tRNA + 5'-deoxyadenosine + L-methionine + 2 oxidized [2Fe-2S]-[ferredoxin] + S-adenosyl-L-homocysteine. Functionally, specifically methylates position 2 of adenine 2503 in 23S rRNA and position 2 of adenine 37 in tRNAs. This chain is Probable dual-specificity RNA methyltransferase RlmN, found in Moorella thermoacetica (strain ATCC 39073 / JCM 9320).